The following is a 411-amino-acid chain: Multifunctional CCA protein (411 aa).

Gly8 and Arg11 together coordinate ATP. Residues Gly8 and Arg11 each contribute to the CTP site. Positions 21 and 23 each coordinate Mg(2+). Residues Arg91, Arg137, and Arg140 each coordinate ATP. Residues Arg91, Arg137, and Arg140 each coordinate CTP. Residues 228–329 (TGVHALLALE…LKTLLALDGL (102 aa)) form the HD domain.

Belongs to the tRNA nucleotidyltransferase/poly(A) polymerase family. Bacterial CCA-adding enzyme type 1 subfamily. As to quaternary structure, monomer. Can also form homodimers and oligomers. It depends on Mg(2+) as a cofactor. Ni(2+) is required as a cofactor.

The enzyme catalyses a tRNA precursor + 2 CTP + ATP = a tRNA with a 3' CCA end + 3 diphosphate. It catalyses the reaction a tRNA with a 3' CCA end + 2 CTP + ATP = a tRNA with a 3' CCACCA end + 3 diphosphate. Catalyzes the addition and repair of the essential 3'-terminal CCA sequence in tRNAs without using a nucleic acid template. Adds these three nucleotides in the order of C, C, and A to the tRNA nucleotide-73, using CTP and ATP as substrates and producing inorganic pyrophosphate. tRNA 3'-terminal CCA addition is required both for tRNA processing and repair. Also involved in tRNA surveillance by mediating tandem CCA addition to generate a CCACCA at the 3' terminus of unstable tRNAs. While stable tRNAs receive only 3'-terminal CCA, unstable tRNAs are marked with CCACCA and rapidly degraded. The sequence is that of Multifunctional CCA protein from Teredinibacter turnerae (strain ATCC 39867 / T7901).